A 499-amino-acid chain; its full sequence is Putative ribose/galactose/methyl galactoside import ATP-binding protein 3 (499 aa).

ABC transporter domains lie at 8–243 (LRMR…VGRE) and 253–497 (SKIG…TGEE). ATP is bound at residue 40 to 47 (GENGAGKS).

It belongs to the ABC transporter superfamily. Carbohydrate importer 2 (CUT2) (TC 3.A.1.2) family.

It is found in the cell inner membrane. It catalyses the reaction D-ribose(out) + ATP + H2O = D-ribose(in) + ADP + phosphate + H(+). The catalysed reaction is D-galactose(out) + ATP + H2O = D-galactose(in) + ADP + phosphate + H(+). Part of an ABC transporter complex involved in carbohydrate import. Could be involved in ribose, galactose and/or methyl galactoside import. Responsible for energy coupling to the transport system. The polypeptide is Putative ribose/galactose/methyl galactoside import ATP-binding protein 3 (Agrobacterium fabrum (strain C58 / ATCC 33970) (Agrobacterium tumefaciens (strain C58))).